The following is a 298-amino-acid chain: Probable endonuclease 4 (298 aa).

The Zn(2+) site is built by H69, H111, E146, D180, H183, H215, D228, H230, and E260.

The protein belongs to the AP endonuclease 2 family. Zn(2+) serves as cofactor.

The enzyme catalyses Endonucleolytic cleavage to 5'-phosphooligonucleotide end-products.. In terms of biological role, endonuclease IV plays a role in DNA repair. It cleaves phosphodiester bonds at apurinic or apyrimidinic (AP) sites, generating a 3'-hydroxyl group and a 5'-terminal sugar phosphate. The chain is Probable endonuclease 4 from Bacillus anthracis (strain A0248).